A 178-amino-acid chain; its full sequence is UPF0302 protein BcerKBAB4_1445 (178 aa).

This sequence belongs to the UPF0302 family.

The polypeptide is UPF0302 protein BcerKBAB4_1445 (Bacillus mycoides (strain KBAB4) (Bacillus weihenstephanensis)).